The primary structure comprises 1427 residues: Lysophospholipase NTE1 (1427 aa).

At 1–60 (MDSLHVSSTSVLVDVVEAVETATSLVVDTAEAVATEQATPTAVISNALARSAYAAHTSLS) the chain is on the cytoplasmic side. A helical membrane pass occupies residues 61-81 (YLAWAFGLWFLRLIGWVCYGI). Topologically, residues 82–96 (PTYVLGLLGRTINIS) are lumenal. A helical membrane pass occupies residues 97-117 (LQFSSLLLILIALVTVVVAVV). Topologically, residues 118–1427 (RYKYLTVYSR…KRTIARRNSI (1310 aa)) are cytoplasmic. The span at 281–296 (PMTSASDVPNMSLSSD) shows a compositional bias: polar residues. Residues 281–315 (PMTSASDVPNMSLSSDGSDDLQKGEPQFGEPRLSE) form a disordered region. A nucleoside 3',5'-cyclic phosphate is bound by residues 615-735 (LMAA…LTKV) and 731-870 (SLTK…VASR). The disordered stretch occupies residues 787 to 807 (GIVGGESGDAKDGKSHRKNLT). One can recognise a PNPLA domain in the interval 1124-1288 (LVLGGGGARG…VDNLPVSEMK (165 aa)). The GXGXXG motif lies at 1128–1133 (GGGARG). The GXSXG signature appears at 1155–1159 (GTSIG). Ser-1157 serves as the catalytic Nucleophile. Asp-1275 functions as the Proton acceptor in the catalytic mechanism. Positions 1275–1277 (DGG) match the DGA/G motif.

The protein belongs to the NTE family.

The protein resides in the endoplasmic reticulum membrane. The enzyme catalyses a 1-acyl-sn-glycero-3-phosphocholine + H2O = sn-glycerol 3-phosphocholine + a fatty acid + H(+). With respect to regulation, inhibited by organophosphorus esters. Functionally, intracellular phospholipase B that catalyzes the double deacylation of phosphatidylcholine (PC) to glycerophosphocholine (GroPCho). Plays an important role in membrane lipid homeostasis. Responsible for the rapid PC turnover in response to inositol, elevated temperatures, or when choline is present in the growth medium. In Yarrowia lipolytica (strain CLIB 122 / E 150) (Yeast), this protein is Lysophospholipase NTE1 (NTE1).